Here is a 170-residue protein sequence, read N- to C-terminus: NADPH-dependent 7-cyano-7-deazaguanine reductase (170 aa).

The active-site Thioimide intermediate is C58. Catalysis depends on D65, which acts as the Proton donor. Substrate-binding positions include 80 to 82 (VES) and 99 to 100 (HE).

It belongs to the GTP cyclohydrolase I family. QueF type 1 subfamily.

The protein localises to the cytoplasm. The catalysed reaction is 7-aminomethyl-7-carbaguanine + 2 NADP(+) = 7-cyano-7-deazaguanine + 2 NADPH + 3 H(+). Its pathway is tRNA modification; tRNA-queuosine biosynthesis. Functionally, catalyzes the NADPH-dependent reduction of 7-cyano-7-deazaguanine (preQ0) to 7-aminomethyl-7-deazaguanine (preQ1). This is NADPH-dependent 7-cyano-7-deazaguanine reductase from Bdellovibrio bacteriovorus (strain ATCC 15356 / DSM 50701 / NCIMB 9529 / HD100).